The sequence spans 259 residues: 5'-nucleotidase SurE (259 aa).

Positions 10, 11, 41, and 96 each coordinate a divalent metal cation.

It belongs to the SurE nucleotidase family. Requires a divalent metal cation as cofactor.

It localises to the cytoplasm. It catalyses the reaction a ribonucleoside 5'-phosphate + H2O = a ribonucleoside + phosphate. In terms of biological role, nucleotidase that shows phosphatase activity on nucleoside 5'-monophosphates. The polypeptide is 5'-nucleotidase SurE (Wolinella succinogenes (strain ATCC 29543 / DSM 1740 / CCUG 13145 / JCM 31913 / LMG 7466 / NCTC 11488 / FDC 602W) (Vibrio succinogenes)).